Consider the following 562-residue polypeptide: MKAPLRALICQGIEALRSNGTLPTNTLPPDFVVERPKTRKHGDFATNVAMLLSKATGSNPRLLAQTLVAALPTSADIARIEIAGPGFINFHLHPVAYQRETINVLKQDNDYGRNLSGQSRTVGVEYVSANPTGPLHVGHGRAAAIGDCLARLLEANGWNVKREFYYNDAGVQIENLVRSVQARARGLKPGDAFWPTDAYNGEYIADIAKAYLAGDSINMVDTIITSTKNVDDTAAIHHFAVNYLRNEQNHDLAAFNVDFDIYFLESSLYKDGKVEETVQKLINSGHTYEEGGALWLKSTHFGDDKDRVMRKSDGSYTYFVPDIAYHLSKWQRGYERAITELGADHHGSLARVHAGLQALEIGIPPGWPEYVLHQMVTVMRGGEEVKLSKRSGGYVTLRDLIEETSTDATRWFLIARKPDSQLTFDIDLARQKSNDNPVFYVQYAYARVCSLMHQAHEKNLNYDQTSGMASLDQLSDNTSLCLMIEISRYPEIVQIACELLEPHLIAQYLRELAHAFHTWYHNTPVLVENAVERNAKLTLACATRQVLANGLNLLGVGTPEKM.

A 'HIGH' region motif is present at residues 129 to 139 (ANPTGPLHVGH).

It belongs to the class-I aminoacyl-tRNA synthetase family. As to quaternary structure, monomer.

It localises to the cytoplasm. The enzyme catalyses tRNA(Arg) + L-arginine + ATP = L-arginyl-tRNA(Arg) + AMP + diphosphate. The sequence is that of Arginine--tRNA ligase (argS) from Xylella fastidiosa (strain 9a5c).